We begin with the raw amino-acid sequence, 220 residues long: Ribose-5-phosphate isomerase A (220 aa).

Substrate contacts are provided by residues 28–31, 81–84, and 94–97; these read TGST, DGAD, and KGGG. Residue Glu-103 is the Proton acceptor of the active site. Residue Lys-121 coordinates substrate.

It belongs to the ribose 5-phosphate isomerase family. Homodimer.

The enzyme catalyses aldehydo-D-ribose 5-phosphate = D-ribulose 5-phosphate. The protein operates within carbohydrate degradation; pentose phosphate pathway; D-ribose 5-phosphate from D-ribulose 5-phosphate (non-oxidative stage): step 1/1. In terms of biological role, catalyzes the reversible conversion of ribose-5-phosphate to ribulose 5-phosphate. This is Ribose-5-phosphate isomerase A from Leptothrix cholodnii (strain ATCC 51168 / LMG 8142 / SP-6) (Leptothrix discophora (strain SP-6)).